Reading from the N-terminus, the 1109-residue chain is Carbamoyl phosphate synthase large chain (1109 aa).

The interval 1 to 402 (MPRRTDLTSV…ALQKAMRSID (402 aa)) is carboxyphosphate synthetic domain. Arg-129, Arg-169, Gly-175, Gly-176, Glu-208, Ile-210, Glu-215, Gly-241, Val-242, His-243, Gln-285, and Glu-299 together coordinate ATP. Positions 133-328 (KGVVERCGAE…IAKIAARLAV (196 aa)) constitute an ATP-grasp 1 domain. The Mg(2+) site is built by Gln-285, Glu-299, and Asn-301. Mn(2+) contacts are provided by Gln-285, Glu-299, and Asn-301. Residues 403-548 (KAGSTFHWRG…YHYSSYDAET (146 aa)) form an oligomerization domain region. A carbamoyl phosphate synthetic domain region spans residues 549-956 (EVQPRDRPAV…AFAKSQAAAY (408 aa)). Residues 678–876 (GEVLVAAGLP…LAKAASLLMA (199 aa)) form the ATP-grasp 2 domain. ATP-binding residues include Arg-714, Arg-760, Leu-762, Glu-767, Gly-792, Ile-793, His-794, Ser-795, Gln-835, and Glu-847. Gln-835, Glu-847, and Asn-849 together coordinate Mg(2+). Gln-835, Glu-847, and Asn-849 together coordinate Mn(2+). The MGS-like domain maps to 957–1102 (GGLPTSGRVF…QEHDAARAAR (146 aa)). The tract at residues 957–1109 (GGLPTSGRVF…AARETEGVHA (153 aa)) is allosteric domain.

The protein belongs to the CarB family. Composed of two chains; the small (or glutamine) chain promotes the hydrolysis of glutamine to ammonia, which is used by the large (or ammonia) chain to synthesize carbamoyl phosphate. Tetramer of heterodimers (alpha,beta)4. It depends on Mg(2+) as a cofactor. Requires Mn(2+) as cofactor.

It catalyses the reaction hydrogencarbonate + L-glutamine + 2 ATP + H2O = carbamoyl phosphate + L-glutamate + 2 ADP + phosphate + 2 H(+). The enzyme catalyses hydrogencarbonate + NH4(+) + 2 ATP = carbamoyl phosphate + 2 ADP + phosphate + 2 H(+). Its pathway is amino-acid biosynthesis; L-arginine biosynthesis; carbamoyl phosphate from bicarbonate: step 1/1. The protein operates within pyrimidine metabolism; UMP biosynthesis via de novo pathway; (S)-dihydroorotate from bicarbonate: step 1/3. Its function is as follows. Large subunit of the glutamine-dependent carbamoyl phosphate synthetase (CPSase). CPSase catalyzes the formation of carbamoyl phosphate from the ammonia moiety of glutamine, carbonate, and phosphate donated by ATP, constituting the first step of 2 biosynthetic pathways, one leading to arginine and/or urea and the other to pyrimidine nucleotides. The large subunit (synthetase) binds the substrates ammonia (free or transferred from glutamine from the small subunit), hydrogencarbonate and ATP and carries out an ATP-coupled ligase reaction, activating hydrogencarbonate by forming carboxy phosphate which reacts with ammonia to form carbamoyl phosphate. The polypeptide is Carbamoyl phosphate synthase large chain (Beutenbergia cavernae (strain ATCC BAA-8 / DSM 12333 / CCUG 43141 / JCM 11478 / NBRC 16432 / NCIMB 13614 / HKI 0122)).